Here is a 421-residue protein sequence, read N- to C-terminus: 4-hydroxy-3-methylbut-2-en-1-yl diphosphate synthase (flavodoxin) (421 aa).

Positions 298, 301, 344, and 351 each coordinate [4Fe-4S] cluster.

This sequence belongs to the IspG family. [4Fe-4S] cluster is required as a cofactor.

It carries out the reaction (2E)-4-hydroxy-3-methylbut-2-enyl diphosphate + oxidized [flavodoxin] + H2O + 2 H(+) = 2-C-methyl-D-erythritol 2,4-cyclic diphosphate + reduced [flavodoxin]. Its pathway is isoprenoid biosynthesis; isopentenyl diphosphate biosynthesis via DXP pathway; isopentenyl diphosphate from 1-deoxy-D-xylulose 5-phosphate: step 5/6. Converts 2C-methyl-D-erythritol 2,4-cyclodiphosphate (ME-2,4cPP) into 1-hydroxy-2-methyl-2-(E)-butenyl 4-diphosphate. The polypeptide is 4-hydroxy-3-methylbut-2-en-1-yl diphosphate synthase (flavodoxin) (Neisseria meningitidis serogroup C (strain 053442)).